The sequence spans 263 residues: Imidazole glycerol phosphate synthase subunit HisF (263 aa).

Residues Asp11 and Asp131 contribute to the active site.

This sequence belongs to the HisA/HisF family. Heterodimer of HisH and HisF.

Its subcellular location is the cytoplasm. The enzyme catalyses 5-[(5-phospho-1-deoxy-D-ribulos-1-ylimino)methylamino]-1-(5-phospho-beta-D-ribosyl)imidazole-4-carboxamide + L-glutamine = D-erythro-1-(imidazol-4-yl)glycerol 3-phosphate + 5-amino-1-(5-phospho-beta-D-ribosyl)imidazole-4-carboxamide + L-glutamate + H(+). It functions in the pathway amino-acid biosynthesis; L-histidine biosynthesis; L-histidine from 5-phospho-alpha-D-ribose 1-diphosphate: step 5/9. In terms of biological role, IGPS catalyzes the conversion of PRFAR and glutamine to IGP, AICAR and glutamate. The HisF subunit catalyzes the cyclization activity that produces IGP and AICAR from PRFAR using the ammonia provided by the HisH subunit. The protein is Imidazole glycerol phosphate synthase subunit HisF of Deinococcus geothermalis (strain DSM 11300 / CIP 105573 / AG-3a).